Reading from the N-terminus, the 380-residue chain is Glucose-1-phosphate adenylyltransferase (380 aa).

Alpha-D-glucose 1-phosphate is bound by residues G164, 179–180 (EK), and S190.

This sequence belongs to the bacterial/plant glucose-1-phosphate adenylyltransferase family. In terms of assembly, homotetramer.

The enzyme catalyses alpha-D-glucose 1-phosphate + ATP + H(+) = ADP-alpha-D-glucose + diphosphate. It participates in glycan biosynthesis; glycogen biosynthesis. In terms of biological role, involved in the biosynthesis of ADP-glucose, a building block required for the elongation reactions to produce glycogen. Catalyzes the reaction between ATP and alpha-D-glucose 1-phosphate (G1P) to produce pyrophosphate and ADP-Glc. This is Glucose-1-phosphate adenylyltransferase from Streptococcus pneumoniae (strain CGSP14).